Here is a 135-residue protein sequence, read N- to C-terminus: Histone H2A.4 (135 aa).

Belongs to the histone H2A family. As to quaternary structure, the nucleosome is a histone octamer containing two molecules each of H2A, H2B, H3 and H4 assembled in one H3-H4 heterotetramer and two H2A-H2B heterodimers. The octamer wraps approximately 147 bp of DNA. In terms of tissue distribution, expressed preferentially in meristematic tissues of young seedlings, in stigma and ovary but not in pollen.

It is found in the nucleus. Its subcellular location is the chromosome. Functionally, core component of nucleosome. Nucleosomes wrap and compact DNA into chromatin, limiting DNA accessibility to the cellular machineries which require DNA as a template. Histones thereby play a central role in transcription regulation, DNA repair, DNA replication and chromosomal stability. DNA accessibility is regulated via a complex set of post-translational modifications of histones, also called histone code, and nucleosome remodeling. This Triticum aestivum (Wheat) protein is Histone H2A.4 (TH254).